The chain runs to 419 residues: Vascular endothelial growth factor C (419 aa).

Positions Met1–Ala31 are cleaved as a signal peptide. Residues Phe32 to Ala111 constitute a propeptide, or 102. 3 disulfide bridges follow: Cys131-Cys173, Cys162-Cys209, and Cys166-Cys211. Residues Asn175, Asn205, and Asn240 are each glycosylated (N-linked (GlcNAc...) asparagine). A propeptide spanning residues Ser228–Ser419 is cleaved from the precursor. Tandem repeats lie at residues Cys280 to Cys295, Cys304 to Cys319, Cys328 to Cys343, and Cys347 to Cys362. Positions Cys280–Cys362 are 4 X 16 AA repeats of C-X(10)-C-X-C-X(1,3)-C.

Belongs to the PDGF/VEGF growth factor family. In terms of assembly, homodimer; non-covalent and antiparallel. Interacts with FLT4/VEGFR3; the interaction is required for FLT4/VEGFR3 homodimarization and activation. Undergoes a complex proteolytic maturation which generates a variety of processed secreted forms with increased activity toward VEGFR-3, but only the fully processed form could activate VEGFR-2. VEGF-C first form an antiparallel homodimer linked by disulfide bonds. Before secretion, a cleavage occurs between Arg-227 and Ser-228 producing a heterotetramer. The next extracellular step of the processing removes the N-terminal propeptide. Finally the mature VEGF-C is composed mostly of two VEGF homology domains (VHDs) bound by non-covalent interactions. Expressed in the spleen. Expressed in the lymph node, thymus, appendix and bone marrow. Expressed in the heart, placenta, skeletal muscle, ovary and small intestine. Expressed in the prostate, testis and colon.

The protein resides in the secreted. In terms of biological role, growth factor active in angiogenesis, and endothelial cell growth, stimulating their proliferation and migration and also has effects on the permeability of blood vessels. May function in angiogenesis of the venous and lymphatic vascular systems during embryogenesis, and also in the maintenance of differentiated lymphatic endothelium in adults. Binds and activates KDR/VEGFR2 and FLT4/VEGFR3 receptors. This chain is Vascular endothelial growth factor C (VEGFC), found in Homo sapiens (Human).